Reading from the N-terminus, the 192-residue chain is Neurogenic differentiation factor 1 (192 aa).

Residues 19 to 71 (VRRVKANGRERARMHGLNNALDMLREYIPITTQHQKLSKIETLRLARNYIDAL) enclose the bHLH domain. A disordered region spans residues 116 to 192 (PSQFDIFSDP…SHQNTFNYSP (77 aa)). A compositionally biased stretch (low complexity) spans 139-163 (SSFSSSSPSSSCSPPQYYYSPTQPS).

As to expression, expressed in neuroblasts of the AB lineage. More specifically in precursors of the embryonic ventral cord motor neurons. Expressed to a lesser degree in the EMS lineage which generates mostly endoderm and mesoderm tissues.

The protein resides in the nucleus. Functionally, acts as a transcriptional regulator whose activity is required for several aspects of motor neuron fate specification, including cell division patterns, proper spatiotemporal expression of fate-specific markers, and normal axonal morphology and pathfinding. Involved in regulating glial specification. This is Neurogenic differentiation factor 1 (cnd-1) from Caenorhabditis elegans.